Consider the following 105-residue polypeptide: 5-hydroxymethyl-dUMP N-hydrolase (105 aa).

5-hydroxymethyl-dUMP is bound by residues glycine 6, isoleucine 8, serine 42, glycine 44, glutamate 48, and serine 72.

It belongs to the 2'-deoxynucleoside 5'-phosphate N-hydrolase 1 family. As to quaternary structure, monomer and homodimer.

Its subcellular location is the cytoplasm. It localises to the nucleus. It catalyses the reaction 5-hydroxymethyl-dUMP + H2O = 5-hydroxymethyluracil + 2-deoxy-D-ribose 5-phosphate. Part of a nucleotide salvage pathway that eliminates epigenetically modified 5-hydroxymethyl-dCMP (hmdCMP) in a two-step process entailing deamination to cytotoxic 5-hydroxymethyl-dUMP (hmdUMP), followed by its hydrolysis into 5-hydroxymethyluracil (hmU) and 2-deoxy-D-ribose 5-phosphate (deoxyribosephosphate). Catalyzes the second step in that pathway, the hydrolysis of the N-glycosidic bond in hmdUMP, degrading this cytotoxic nucleotide to avoid its genomic integration. This chain is 5-hydroxymethyl-dUMP N-hydrolase, found in Branchiostoma floridae (Florida lancelet).